The primary structure comprises 132 residues: MTMTDPIADMLTRIRNAQSVYHKQVEIPASKLKRELVDILKREGYINDFEYIDDNKQGILRIELKYSDNDEQVISGLKRISKPGLRVYAKKDEIPRVLGGLGIAVVSTSSGLLTDREARDQGIGGEILCYIW.

Belongs to the universal ribosomal protein uS8 family. Part of the 30S ribosomal subunit. Contacts proteins S5 and S12.

One of the primary rRNA binding proteins, it binds directly to 16S rRNA central domain where it helps coordinate assembly of the platform of the 30S subunit. The polypeptide is Small ribosomal subunit protein uS8 (Natranaerobius thermophilus (strain ATCC BAA-1301 / DSM 18059 / JW/NM-WN-LF)).